The chain runs to 716 residues: DNA ligase (716 aa).

NAD(+)-binding positions include 47-51 (DATYD), 96-97 (SL), and Glu-130. Residue Lys-132 is the N6-AMP-lysine intermediate of the active site. Residues Arg-153, Glu-190, Lys-306, and Lys-330 each contribute to the NAD(+) site. 4 residues coordinate Zn(2+): Cys-435, Cys-438, Cys-453, and Cys-459. Residues 638 to 716 (RSDSAVAGKT…EDEWLKLIEG (79 aa)) enclose the BRCT domain.

The protein belongs to the NAD-dependent DNA ligase family. LigA subfamily. Mg(2+) serves as cofactor. The cofactor is Mn(2+).

The catalysed reaction is NAD(+) + (deoxyribonucleotide)n-3'-hydroxyl + 5'-phospho-(deoxyribonucleotide)m = (deoxyribonucleotide)n+m + AMP + beta-nicotinamide D-nucleotide.. Functionally, DNA ligase that catalyzes the formation of phosphodiester linkages between 5'-phosphoryl and 3'-hydroxyl groups in double-stranded DNA using NAD as a coenzyme and as the energy source for the reaction. It is essential for DNA replication and repair of damaged DNA. This chain is DNA ligase, found in Nitrobacter winogradskyi (strain ATCC 25391 / DSM 10237 / CIP 104748 / NCIMB 11846 / Nb-255).